A 372-amino-acid chain; its full sequence is ATP-sensitive inward rectifier potassium channel 1 (372 aa).

Topologically, residues 1–58 (MFKHLRRWFVTHIFGRSRQRARLVSKDGRCNIEFGNVDAQSRFIFFVDIWTTVLDLKW) are cytoplasmic. Serine 25 is modified (phosphoserine; by SGK1). Residues 59–83 (RYKMTVFITAFLGSWFLFGLLWYVV) traverse the membrane as a helical segment. Over 84-108 (AYVHKDLPEFYPPDNRTPCVENING) the chain is Extracellular. Residue asparagine 98 is glycosylated (N-linked (GlcNAc...) asparagine). The helical; Pore-forming intramembrane region spans 109–120 (MTSAFLFSLETQ). An intramembrane region (pore-forming) is located at residues 121-127 (VTIGYGF). The Selectivity filter motif lies at 122 to 127 (TIGYGF). Over 128–136 (RFVTEQCAT) the chain is Extracellular. Residues 137–158 (AIFLLIFQSILGVIINSFMCGA) form a helical membrane-spanning segment. Residues 159-372 (ILAKISRPKK…EVDETDDTQM (214 aa)) are Cytoplasmic-facing. The tract at residues 161–188 (AKISRPKKRAKTITFSKNAVISKRGGKL) is polyphosphoinositide (PIP2)-binding. Residue 204 to 211 (GSHIYGKL) coordinates ATP.

Belongs to the inward rectifier-type potassium channel (TC 1.A.2.1) family. KCNJ1 subfamily. Interacts with SGK1 and SLC9A3R2/NHERF2. Post-translationally, phosphorylation at Ser-25 by SGK1 is necessary for its expression at the cell membrane.

It is found in the cell membrane. It catalyses the reaction K(+)(in) = K(+)(out). Its activity is regulated as follows. Inhibited by WNK3. Activated by phosphatidylinositol 4,5 biphosphate (PtdIns(4,5)P2). Functionally, inward rectifier potassium channels are characterized by a greater tendency to allow potassium to flow into the cell rather than out of it. Their voltage dependence is regulated by the concentration of extracellular potassium; as external potassium is raised, the voltage range of the channel opening shifts to more positive voltages. The inward rectification is mainly due to the blockage of outward current by internal magnesium. This channel is activated by internal ATP and can be blocked by external barium. In the kidney, probably plays a major role in potassium homeostasis. The protein is ATP-sensitive inward rectifier potassium channel 1 (Kcnj1) of Mus musculus (Mouse).